We begin with the raw amino-acid sequence, 427 residues long: Dorsalin-1 (427 aa).

Positions 1-20 (MHYFGVLAALSVFNIIACLT) are cleaved as a signal peptide. A propeptide spanning residues 21–318 (RGKPLENWKK…PRQHSSRSKR (298 aa)) is cleaved from the precursor. N-linked (GlcNAc...) asparagine glycosylation is found at Asn-71, Asn-136, Asn-265, and Asn-292. A disordered region spans residues 288–321 (KLGKNDSSSEEEQREEKAIARPRQHSSRSKRSIG). Residues 307 to 321 (ARPRQHSSRSKRSIG) show a composition bias toward basic residues. Disulfide bonds link Cys-325–Cys-391, Cys-354–Cys-424, and Cys-358–Cys-426.

Belongs to the TGF-beta family. In terms of assembly, homodimer; disulfide-linked. In terms of tissue distribution, expressed selectively in the dorsal neural tube. Lower levels seen in kidney and myotomal cells.

It is found in the secreted. Appears to regulate cell differentiation within the neural tube. May regulate the differentiation of cell types along the dorsoventral axis of the neural tube, acting in conjunction with distinct ventralizing signals from the notochord and floor plate. Controls the cell differentiation in the neural tube in several ways: (1) promotes the differentiation of cell types that derive from the dorsal neural tube. (2) ensures that the dorsal neural tube is refractory to ventralizing species from the notochord. (3) can diffuse and influence the fate of cells in more ventral regions of the neural tube. The chain is Dorsalin-1 (DSL1) from Gallus gallus (Chicken).